The chain runs to 158 residues: SKP1-like protein 18 (158 aa).

The interval 99-157 (ILAANYLNFEGLLGFASQTVADYIKDKTPEEVREIFNIENDFTPEEEEEIRKENAWTFN) is interaction with the F-box domain of F-box proteins.

The protein belongs to the SKP1 family. In terms of assembly, part of a SCF (SKP1-cullin-F-box) protein ligase complex. Interacts with CPR1/CPR30, EBF1, SKP2A, At3g61590, At4g38940 and At5g49610. Expressed in young seedlings, roots, leaves, floral stems, inflorescences, pollen, and siliques.

The protein resides in the nucleus. It functions in the pathway protein modification; protein ubiquitination. Involved in ubiquitination and subsequent proteasomal degradation of target proteins. Together with CUL1, RBX1 and a F-box protein, it forms a SCF E3 ubiquitin ligase complex. The functional specificity of this complex depends on the type of F-box protein. In the SCF complex, it serves as an adapter that links the F-box protein to CUL1. In Arabidopsis thaliana (Mouse-ear cress), this protein is SKP1-like protein 18 (ASK18).